Consider the following 187-residue polypeptide: CASP-like protein 2C1 (187 aa).

Topologically, residues 1-14 (MVAAARVVSGVKAE) are cytoplasmic. The helical transmembrane segment at 15-35 (GLLRGACAALAAAAALLLGLS) threads the bilayer. The Extracellular segment spans residues 36–54 (TQTETVLLVRKKGTVKDVQ). A helical transmembrane segment spans residues 55–75 (ALWVLAMAAASAAGYHLLQLL). Residues 76–97 (KCLYLGRGGGRALAWTCLLLDK) lie on the Cytoplasmic side of the membrane. The helical transmembrane segment at 98–118 (ACAYATFATTVAAAQACVVAL) threads the bilayer. Over 119–139 (DGAHALQWTKLCNIYTRFCEQ) the chain is Extracellular. A helical membrane pass occupies residues 140–160 (VAGSLVLGMLAAVGTAVLSAA). Residues 161 to 187 (SARNVFRHYYCSSHSPPAPPPETCDAH) lie on the Cytoplasmic side of the membrane.

This sequence belongs to the Casparian strip membrane proteins (CASP) family. As to quaternary structure, homodimer and heterodimers.

The protein localises to the cell membrane. The chain is CASP-like protein 2C1 from Zea mays (Maize).